The primary structure comprises 351 residues: MKQRTWPCRSEGSRFSSLSFLKPHDKDKRSRISSINKATAKSTTSSRSSSSSSSSRPPSNEFGDFSMLPYDILMKIAAPFSHPNLQAASLVCKSWRDALKPLRESMLLIRWGKKYKHGRGGVRANLDKALDSFLKGAMRGSTLAMVDAGLVYWERGEKEKAVNLYRRASELGDAVGQCNLGIAYLQVQPSNPKEAMKWLKQSAENGYVRAQYQLALCLHHGRVVQTNLLEATKWYLKAAEGGYVRAMYNISLCYSVGEGLPQNRKLARKWMKRAADHGHSKAQFEHGLALFSEGEMLKSVLYLELAERGGEAAATPVKEVVHQQLSATFGGQAVHHAIHQANNWRPLPVTR.

The tract at residues 1 to 60 (MKQRTWPCRSEGSRFSSLSFLKPHDKDKRSRISSINKATAKSTTSSRSSSSSSSSRPPSN) is disordered. Residues 32-41 (ISSINKATAK) are compositionally biased toward polar residues. Residues 42-59 (STTSSRSSSSSSSSRPPS) are compositionally biased toward low complexity. An F-box domain is found at 62 to 111 (FGDFSMLPYDILMKIAAPFSHPNLQAASLVCKSWRDALKPLRESMLLIRW). A Sel1-like repeat occupies 105 to 141 (SMLLIRWGKKYKHGRGGVRANLDKALDSFLKGAMRGS). A TPR repeat occupies 142–175 (TLAMVDAGLVYWERGEKEKAVNLYRRASELGDAV).

This chain is F-box protein At1g70590, found in Arabidopsis thaliana (Mouse-ear cress).